Consider the following 160-residue polypeptide: Large ribosomal subunit protein eL21B (160 aa).

Residues 114-140 (AKRKEAKAQGKTVQLRRQPAPPATAHF) form a disordered region.

Belongs to the eukaryotic ribosomal protein eL21 family. As to quaternary structure, component of the large ribosomal subunit (LSU). Mature yeast ribosomes consist of a small (40S) and a large (60S) subunit. The 40S small subunit contains 1 molecule of ribosomal RNA (18S rRNA) and at least 33 different proteins. The large 60S subunit contains 3 rRNA molecules (25S, 5.8S and 5S rRNA) and at least 46 different proteins.

The protein localises to the cytoplasm. Its function is as follows. Component of the ribosome, a large ribonucleoprotein complex responsible for the synthesis of proteins in the cell. The small ribosomal subunit (SSU) binds messenger RNAs (mRNAs) and translates the encoded message by selecting cognate aminoacyl-transfer RNA (tRNA) molecules. The large subunit (LSU) contains the ribosomal catalytic site termed the peptidyl transferase center (PTC), which catalyzes the formation of peptide bonds, thereby polymerizing the amino acids delivered by tRNAs into a polypeptide chain. The nascent polypeptides leave the ribosome through a tunnel in the LSU and interact with protein factors that function in enzymatic processing, targeting, and the membrane insertion of nascent chains at the exit of the ribosomal tunnel. The protein is Large ribosomal subunit protein eL21B (rpl2102) of Schizosaccharomyces pombe (strain 972 / ATCC 24843) (Fission yeast).